The chain runs to 296 residues: mRNA 3'-end-processing protein RNA15 (296 aa).

The region spanning 18 to 96 (RVVYLGSIPY…RFLKCGYSSN (79 aa)) is the RRM domain. The segment at 99–140 (ISGVSQQQQQQYNNINGNNNNNGNNNNNSNGPDFQNSGNANF) is disordered. Residues 100-135 (SGVSQQQQQQYNNINGNNNNNGNNNNNSNGPDFQNS) are compositionally biased toward low complexity.

As to quaternary structure, component of the CFIA complex, which is composed of RNA14, RNA15, PCF11 and CLP1. Interacts directly with RNA14. Interacts with polyadenylate-binding protein PAB1.

The protein resides in the nucleus. In terms of biological role, RNA-binding component of the cleavage factor IA (CFIA) complex, which is involved in the endonucleolytic cleavage during polyadenylation-dependent pre-mRNA 3'-end formation and cooperates with the cleavage factor NAB4/CFIB and the cleavage and polyadenylation factor (CPF) complex. Binds to A-rich RNA sequence elements. The sequence is that of mRNA 3'-end-processing protein RNA15 (RNA15) from Saccharomyces cerevisiae (strain ATCC 204508 / S288c) (Baker's yeast).